Reading from the N-terminus, the 351-residue chain is Ribosomal RNA small subunit methyltransferase H (351 aa).

S-adenosyl-L-methionine contacts are provided by residues 48–50 (GGY), aspartate 67, phenylalanine 94, aspartate 115, and glutamine 122. The interval 274–351 (AAQASRHVPG…PAPQGRGPRR (78 aa)) is disordered.

It belongs to the methyltransferase superfamily. RsmH family.

Its subcellular location is the cytoplasm. It carries out the reaction cytidine(1402) in 16S rRNA + S-adenosyl-L-methionine = N(4)-methylcytidine(1402) in 16S rRNA + S-adenosyl-L-homocysteine + H(+). Specifically methylates the N4 position of cytidine in position 1402 (C1402) of 16S rRNA. The polypeptide is Ribosomal RNA small subunit methyltransferase H (Methylorubrum extorquens (strain PA1) (Methylobacterium extorquens)).